The sequence spans 203 residues: Small ribosomal subunit protein uS4 (203 aa).

The disordered stretch occupies residues 22–45 (TGKELARRPYKPGQHGPNSRGKVS). Residues 93-156 (QRLDNVVYRL…QNISTIKEAV (64 aa)) form the S4 RNA-binding domain.

Belongs to the universal ribosomal protein uS4 family. Part of the 30S ribosomal subunit. Contacts protein S5. The interaction surface between S4 and S5 is involved in control of translational fidelity.

Its function is as follows. One of the primary rRNA binding proteins, it binds directly to 16S rRNA where it nucleates assembly of the body of the 30S subunit. Functionally, with S5 and S12 plays an important role in translational accuracy. This Enterococcus faecalis (strain ATCC 700802 / V583) protein is Small ribosomal subunit protein uS4.